We begin with the raw amino-acid sequence, 193 residues long: MDKQQDQQQEARPVLEGPDIARVLTRIAHEIVERAKGADDVVLLGIPTRGVFLARRLADKLEQITERKMPVGSLDITMYRDDLRMHPPRALARTEIPGDGIDGRLVVLVDDVLFSGRTIRAALDALNDIGRPRAVQLAVLVDRGHRELPIRADYVGKNLPTSLRETVKVQLAEEDGRDTVLLGAKPAAPGAHP.

Substrate contacts are provided by residues 48–49 (TR), R89, R93, 110–118 (DDVLFSGRT), R143, and V167. The PRPP-binding motif lies at 106-118 (VVLVDDVLFSGRT).

This sequence belongs to the purine/pyrimidine phosphoribosyltransferase family. PyrR subfamily.

It carries out the reaction UMP + diphosphate = 5-phospho-alpha-D-ribose 1-diphosphate + uracil. Regulates the transcription of the pyrimidine nucleotide (pyr) operon in response to exogenous pyrimidines. Functionally, also displays a weak uracil phosphoribosyltransferase activity which is not physiologically significant. This chain is Bifunctional protein PyrR, found in Streptomyces coelicolor (strain ATCC BAA-471 / A3(2) / M145).